The sequence spans 295 residues: AP-1-like transcription factor YAP4 (295 aa).

Serine 85, serine 89, and serine 196 each carry phosphoserine. Residues 181 to 202 (ASYFPSNSTPATRKNSATTNLP) are compositionally biased toward polar residues. The interval 181-205 (ASYFPSNSTPATRKNSATTNLPSEE) is disordered. A bZIP domain is found at 237–295 (PLRNTKRAAQNRSAQKAFRQRREKYIKNLEEKSKLFDGLMKENSELKKMIESLKSKLKE). The segment at 239–260 (RNTKRAAQNRSAQKAFRQRREK) is basic motif. Residues 262–271 (IKNLEEKSKL) form a leucine-zipper region.

This sequence belongs to the bZIP family. YAP subfamily. Homodimer.

It is found in the cytoplasm. The protein localises to the nucleus. In terms of biological role, transcription activator involved in the regulation of genes expressed in response to environmental changes and metabolic requirements. According to genome-wide promoter binding and gene expression studies it regulates, among others, genes involved in ribosome biogenesis, and protein synthesis. It may also be involved in pleiotropic drug resistance. When overexpressed it confers increased resistance to cisplatin, the DNA-alkylating agents methylmethanosulfonate, and mitomycin C, the antimalarial drugs quinidine, mefloquine, and chloroquine, and increases cellular tolerance to sodium and lithium. Preferentially binds 5'-TTACTAA-3'. In Saccharomyces cerevisiae (strain ATCC 204508 / S288c) (Baker's yeast), this protein is AP-1-like transcription factor YAP4 (CIN5).